A 376-amino-acid polypeptide reads, in one-letter code: Erythronate-4-phosphate dehydrogenase (376 aa).

Substrate-binding residues include Ser45 and Thr67. NAD(+) is bound at residue Asp147. Arg209 is an active-site residue. Asp233 is an NAD(+) binding site. Residue Glu238 is part of the active site. Catalysis depends on His255, which acts as the Proton donor. Gly258 contributes to the NAD(+) binding site. Tyr259 lines the substrate pocket.

The protein belongs to the D-isomer specific 2-hydroxyacid dehydrogenase family. PdxB subfamily. In terms of assembly, homodimer.

The protein localises to the cytoplasm. It catalyses the reaction 4-phospho-D-erythronate + NAD(+) = (R)-3-hydroxy-2-oxo-4-phosphooxybutanoate + NADH + H(+). It participates in cofactor biosynthesis; pyridoxine 5'-phosphate biosynthesis; pyridoxine 5'-phosphate from D-erythrose 4-phosphate: step 2/5. Functionally, catalyzes the oxidation of erythronate-4-phosphate to 3-hydroxy-2-oxo-4-phosphonooxybutanoate. The chain is Erythronate-4-phosphate dehydrogenase from Shewanella baltica (strain OS185).